Consider the following 97-residue polypeptide: Large ribosomal subunit protein bL27 (97 aa).

Positions 1-12 are excised as a propeptide; it reads MLKMNLANLQLF. The disordered stretch occupies residues 14-38; it reads HKKGGGSTSNGRDSESKRLGAKAAD.

It belongs to the bacterial ribosomal protein bL27 family. In terms of processing, the N-terminus is cleaved by ribosomal processing cysteine protease Prp.

In Streptococcus mutans serotype c (strain ATCC 700610 / UA159), this protein is Large ribosomal subunit protein bL27.